The following is a 303-amino-acid chain: Uracil phosphoribosyltransferase (303 aa).

The interval 1–86 (MHIIMKTILA…RYVSSTPTDS (86 aa)) is unknown. The tract at residues 87 to 303 (LSSKPLAAVY…DRLCGTSNPS (217 aa)) is UPRTase. Residues Arg170, Arg195, and 222–230 (DPMLATGGS) contribute to the 5-phospho-alpha-D-ribose 1-diphosphate site. Residues Ile285 and 290–292 (GDA) each bind uracil. Asp291 serves as a coordination point for 5-phospho-alpha-D-ribose 1-diphosphate.

This sequence belongs to the UPRTase family. Mg(2+) serves as cofactor.

The catalysed reaction is UMP + diphosphate = 5-phospho-alpha-D-ribose 1-diphosphate + uracil. It participates in pyrimidine metabolism; UMP biosynthesis via salvage pathway; UMP from uracil: step 1/1. Allosterically activated by GTP. Catalyzes the conversion of uracil and 5-phospho-alpha-D-ribose 1-diphosphate (PRPP) to UMP and diphosphate. The protein is Uracil phosphoribosyltransferase (upp) of Chlamydia muridarum (strain MoPn / Nigg).